The sequence spans 354 residues: Heat-inducible transcription repressor HrcA (354 aa).

It belongs to the HrcA family.

Its function is as follows. Negative regulator of class I heat shock genes (grpE-dnaK-dnaJ and groELS operons). Prevents heat-shock induction of these operons. This chain is Heat-inducible transcription repressor HrcA, found in Novosphingobium aromaticivorans (strain ATCC 700278 / DSM 12444 / CCUG 56034 / CIP 105152 / NBRC 16084 / F199).